The primary structure comprises 558 residues: Armadillo repeat-containing X-linked protein 5 (558 aa).

Basic and acidic residues-rich tracts occupy residues 1–14 and 139–156; these read MVDS…RGKA and KSHD…REET. 2 disordered regions span residues 1–35 and 139–165; these read MVDS…GKTQ and KSHD…SSDE. The stretch at 300–339 is one ARM 1 repeat; sequence CKSRGFSLEPKEFDKLVALLKLTKDPFIHEIATMIMGISP. Positions 369–388 are disordered; sequence HPGALSMVDDSSESSEEPKS. ARM repeat units lie at residues 422–461, 463–503, and 520–558; these read IKFE…CLSK, HANT…NINF, and SELI…ILKL.

Belongs to the eutherian X-chromosome-specific Armcx family.

This Homo sapiens (Human) protein is Armadillo repeat-containing X-linked protein 5 (ARMCX5).